The chain runs to 318 residues: Ribosomal RNA small subunit methyltransferase H (318 aa).

S-adenosyl-L-methionine is bound by residues 38–40 (AGH), D57, L91, D105, and Q112.

Belongs to the methyltransferase superfamily. RsmH family.

The protein resides in the cytoplasm. It catalyses the reaction cytidine(1402) in 16S rRNA + S-adenosyl-L-methionine = N(4)-methylcytidine(1402) in 16S rRNA + S-adenosyl-L-homocysteine + H(+). Specifically methylates the N4 position of cytidine in position 1402 (C1402) of 16S rRNA. This chain is Ribosomal RNA small subunit methyltransferase H, found in Clavibacter michiganensis subsp. michiganensis (strain NCPPB 382).